We begin with the raw amino-acid sequence, 305 residues long: Ribonuclease HIII (305 aa).

Residues 91–305 (WSVIGSDEVG…ANTQKAQKLL (215 aa)) form the RNase H type-2 domain. A divalent metal cation is bound by residues aspartate 97, glutamate 98, and aspartate 201.

It belongs to the RNase HII family. RnhC subfamily. The cofactor is Mn(2+). It depends on Mg(2+) as a cofactor.

Its subcellular location is the cytoplasm. It carries out the reaction Endonucleolytic cleavage to 5'-phosphomonoester.. In terms of biological role, endonuclease that specifically degrades the RNA of RNA-DNA hybrids. The polypeptide is Ribonuclease HIII (Enterococcus faecalis (strain ATCC 700802 / V583)).